A 509-amino-acid chain; its full sequence is Cytochrome P450 monooxygenase traB (509 aa).

Residues 8 to 28 (LVELVSITGGLIVLFIAYTGF) form a helical membrane-spanning segment. Cys453 provides a ligand contact to heme.

The protein belongs to the cytochrome P450 family. The cofactor is heme.

Its subcellular location is the membrane. It participates in secondary metabolite biosynthesis. Functionally, cytochrome P450 monooxygenase; part of the tra gene cluster that produces terrestric acid. The clavatol biosynthesis cluster cla and the terrestric acid cluster tra are both involved in the production of peniphenones and penilactones. The non-reducing PKS claF is responsible for the formation of clavatol from successive condensations of 3 malonyl-CoA units, presumably with a simple acetyl-CoA starter unit, and 2 methylation steps. The esterase claE probably collaborates with claF by catalyzing the hydrolysis of ACP-bound acyl intermediates to free the ACP from stalled intermediates. The clavatol oxidase claD then converts clavatol to hydroxyclavatol. Spontaneous dehydration of hydroxyclavatol leads to the accumulation of the highly active ortho-quinone methide. On the other hand, the PKS-NRPS hybrid traA is involved in the formation of crustosic acid, with the help of traB and traD. The polyketide synthase module (PKS) of traA is responsible for the synthesis of the polyketide backbone via the condensation of an acetyl-CoA starter unit with 3 malonyl-CoA units. The downstream nonribosomal peptide synthetase (NRPS) module then amidates the carboxyl end of the polyketide with L-malic acid. Because traA lacks a designated enoylreductase (ER) domain, the required activity is provided the enoyl reductase traG. Crustosic acid undergoes decarboxylation and isomerization to the terrestric acid, catalyzed by the 2-oxoglutarate-dependent dioxygenase traH. Both acids are further converted to the 2 gamma-butyrolactones (R)-5-methyltetronic acid and (S)-5-carboxylmethyltetronic acid, with involvement of the cytochrome P450 monooxygenase claJ. Spontaneous addition of the methide to these gamma-butyrolactones leads to peniphenone D and penilactone D, which undergo again stereospecific attacking by methide to give penilactones A and B. The chain is Cytochrome P450 monooxygenase traB from Penicillium crustosum (Blue mold fungus).